Here is a 402-residue protein sequence, read N- to C-terminus: Imidazolonepropionase (402 aa).

Fe(3+) is bound by residues His66 and His68. Zn(2+)-binding residues include His66 and His68. The 4-imidazolone-5-propanoate site is built by Arg75, Tyr138, and His171. Tyr138 is an N-formimidoyl-L-glutamate binding site. His236 is a binding site for Fe(3+). His236 contributes to the Zn(2+) binding site. Residue Gln239 participates in 4-imidazolone-5-propanoate binding. Asp311 provides a ligand contact to Fe(3+). A Zn(2+)-binding site is contributed by Asp311. Residues Asn313 and Gly315 each contribute to the N-formimidoyl-L-glutamate site. Position 316 (Thr316) interacts with 4-imidazolone-5-propanoate.

Belongs to the metallo-dependent hydrolases superfamily. HutI family. Zn(2+) is required as a cofactor. Requires Fe(3+) as cofactor.

The protein localises to the cytoplasm. The catalysed reaction is 4-imidazolone-5-propanoate + H2O = N-formimidoyl-L-glutamate. It functions in the pathway amino-acid degradation; L-histidine degradation into L-glutamate; N-formimidoyl-L-glutamate from L-histidine: step 3/3. In terms of biological role, catalyzes the hydrolytic cleavage of the carbon-nitrogen bond in imidazolone-5-propanoate to yield N-formimidoyl-L-glutamate. It is the third step in the universal histidine degradation pathway. In Pseudomonas paraeruginosa (strain DSM 24068 / PA7) (Pseudomonas aeruginosa (strain PA7)), this protein is Imidazolonepropionase.